Here is a 146-residue protein sequence, read N- to C-terminus: Ribosome-binding factor A (146 aa).

The segment at 122–146 is disordered; sequence QQQFGSVDDVTENDIDEADDTEGKA. A compositionally biased stretch (acidic residues) spans 130–146; it reads DVTENDIDEADDTEGKA.

It belongs to the RbfA family. Monomer. Binds 30S ribosomal subunits, but not 50S ribosomal subunits or 70S ribosomes.

Its subcellular location is the cytoplasm. Its function is as follows. One of several proteins that assist in the late maturation steps of the functional core of the 30S ribosomal subunit. Associates with free 30S ribosomal subunits (but not with 30S subunits that are part of 70S ribosomes or polysomes). Required for efficient processing of 16S rRNA. May interact with the 5'-terminal helix region of 16S rRNA. The polypeptide is Ribosome-binding factor A (Shewanella sp. (strain MR-7)).